The following is a 282-amino-acid chain: Cholesterol 25-hydroxylase-like protein 1, member 1 (282 aa).

Asn-3 carries an N-linked (GlcNAc...) asparagine glycan. A run of 3 helical transmembrane segments spans residues 40–60 (FFPV…FAVL), 85–107 (MLRT…VLIT), and 127–147 (FSGG…WHMV). The Fatty acid hydroxylase domain occupies 133–265 (ALLVFDTQYF…FSHWDKIFGT (133 aa)). The Histidine box-1 motif lies at 144–148 (WHMVH). The short motif at 159-163 (HAIHH) is the Histidine box-2 element. The Histidine box-3 motif lies at 240-246 (AHDMHHQ).

The protein belongs to the sterol desaturase family. Requires Fe cation as cofactor.

The protein localises to the endoplasmic reticulum membrane. In terms of biological role, may catalyze the formation of 25-hydroxycholesterol from cholesterol. In Danio rerio (Zebrafish), this protein is Cholesterol 25-hydroxylase-like protein 1, member 1 (ch25hl1.1).